Here is a 695-residue protein sequence, read N- to C-terminus: G-patch and R3H domain-containing protein C30B4.02c (695 aa).

6 disordered regions span residues 168 to 200, 213 to 242, 257 to 317, 332 to 351, 388 to 448, and 475 to 517; these read SDKEISSTEESEQLCYKEQESEKELYSKDNDDS, DIANNNAAPPPPLAQAQEQLSTENEDEFDI, FADL…FDEG, GNTDSLAEDEDDILEEDEDE, DSED…VAAR, and DKSK…DSDN. The span at 182-198 shows a compositional bias: basic and acidic residues; it reads CYKEQESEKELYSKDND. Acidic residues-rich tracts occupy residues 262–286, 307–317, and 337–351; these read VLEEDDDDEDEDEELEGEKEEEEEE, EDSESLEFDEG, and LAEDEDDILEEDEDE. Over residues 421–434 the composition is skewed to basic residues; it reads KKDRKLPKKMRKAQ. Residues 525–587 enclose the R3H domain; sequence KIFINDVYQR…KRYTMLSKTH (63 aa). The 44-residue stretch at 652-695 folds into the G-patch domain; sequence KENPGRRLLEKLGWYAGKGLGHPENEGSKDSLRAIVKVSRSGLG.

Its subcellular location is the cytoplasm. The chain is G-patch and R3H domain-containing protein C30B4.02c from Schizosaccharomyces pombe (strain 972 / ATCC 24843) (Fission yeast).